The sequence spans 603 residues: Keratin, type II cuticular Hb4 (603 aa).

The interval 1 to 173 is head; that stretch reads MSCRSYRVSS…PNAQRVKRDE (173 aa). One can recognise an IF rod domain in the interval 173 to 484; sequence EKEQIKTLNN…RLLEGEEIRI (312 aa). The segment at 174 to 208 is coil 1A; that stretch reads KEQIKTLNNKFASFIDKVRFLEQQNKLLETKWSFL. The linker 1 stretch occupies residues 209-218; sequence QEQKCARSNL. A coil 1B region spans residues 219–319; the sequence is EPLFDNYITN…YHEEIEMLQS (101 aa). The linker 12 stretch occupies residues 320–336; sequence HISETSVIVKMDNSRDL. Positions 337 to 480 are coil 2; it reads NLDGIIAEVK…VTYRRLLEGE (144 aa). The tract at residues 481-603 is tail; it reads EIRICEGVGP…STTTSRRTRY (123 aa). Positions 579-603 are disordered; that stretch reads CSGGRGNRSSSVRFSSTTTSRRTRY.

This sequence belongs to the intermediate filament family. In terms of assembly, heterotetramer of two type I and two type II keratins. In terms of tissue distribution, in skin, only expressed in the suprabasal cells of tail scale epidermis. Suprabasally expressed in stratified squamous epithelia and also in the posterior unit of the complex filiform papillae of tongue. Expressed in rare anatomical sites in which an orthokeratinized stratum corneum would be too soft and a hard keratinized structure would be too rigid to meet the functional requirement of the respective epithelia.

The protein is Keratin, type II cuticular Hb4 (Krt84) of Mus musculus (Mouse).